Here is a 477-residue protein sequence, read N- to C-terminus: MQIQLPMFQNSRVVVVGDVMLDRYWYGATSRISPEAPVPVVKVEQLEDRPGGAANVALNIAALGSAAVILGVTGKDEAAQSLAARMESAGILADFQEHETLPTITKLRVISRHQQLIRMDFEESFAGVPQEQLEKKVAGQLAGAGALVLSDYGKGALRDPQAFIQLARSKQIPVLVDPKGSDFEKYRGATLITPNLSEFEAVVGHCTSEAELVQRGLKLVEELELEALLVTRSEQGMTLLRAGRSELHLPAQAKEVFDVTGAGDTVISVLAAALAAGSEMGQAVALANIAAGIVVGKLGTASVSAPELRRAVQQEQGAGRGAMTVEQLKVALDDARAHGEKIVFTNGCFDIIHAGHVGYLDQARKLGDRLVVAINSDASVSRLKGPARPINPLERRMAVLAGLEAVDWVTWYEDDTPERLLEILKPDILVKGGDYSKEQVVGWEIVEGYGGEVRALDFLDNCSTTAIVEKIRKDQVK.

The ribokinase stretch occupies residues 1 to 318; sequence MQIQLPMFQN…RRAVQQEQGA (318 aa). 195-198 is a binding site for ATP; the sequence is NLSE. Residue aspartate 264 is part of the active site. A cytidylyltransferase region spans residues 344–477; it reads FTNGCFDIIH…VEKIRKDQVK (134 aa).

The protein in the N-terminal section; belongs to the carbohydrate kinase PfkB family. This sequence in the C-terminal section; belongs to the cytidylyltransferase family. In terms of assembly, homodimer.

It catalyses the reaction D-glycero-beta-D-manno-heptose 7-phosphate + ATP = D-glycero-beta-D-manno-heptose 1,7-bisphosphate + ADP + H(+). It carries out the reaction D-glycero-beta-D-manno-heptose 1-phosphate + ATP + H(+) = ADP-D-glycero-beta-D-manno-heptose + diphosphate. It participates in nucleotide-sugar biosynthesis; ADP-L-glycero-beta-D-manno-heptose biosynthesis; ADP-L-glycero-beta-D-manno-heptose from D-glycero-beta-D-manno-heptose 7-phosphate: step 1/4. The protein operates within nucleotide-sugar biosynthesis; ADP-L-glycero-beta-D-manno-heptose biosynthesis; ADP-L-glycero-beta-D-manno-heptose from D-glycero-beta-D-manno-heptose 7-phosphate: step 3/4. Functionally, catalyzes the phosphorylation of D-glycero-D-manno-heptose 7-phosphate at the C-1 position to selectively form D-glycero-beta-D-manno-heptose-1,7-bisphosphate. Catalyzes the ADP transfer from ATP to D-glycero-beta-D-manno-heptose 1-phosphate, yielding ADP-D-glycero-beta-D-manno-heptose. This Hahella chejuensis (strain KCTC 2396) protein is Bifunctional protein HldE.